Reading from the N-terminus, the 340-residue chain is tRNA-specific 2-thiouridylase MnmA (340 aa).

Residues 6–13 and Met-32 each bind ATP; that span reads AMSGGVDS. Cys-92 serves as the catalytic Nucleophile. The cysteines at positions 92 and 186 are disulfide-linked. Gly-116 is an ATP binding site. An interaction with tRNA region spans residues 134–136; that stretch reads KDQ. Cys-186 functions as the Cysteine persulfide intermediate in the catalytic mechanism. The interval 288 to 289 is interaction with tRNA; the sequence is RY.

The protein belongs to the MnmA/TRMU family.

It localises to the cytoplasm. The catalysed reaction is S-sulfanyl-L-cysteinyl-[protein] + uridine(34) in tRNA + AH2 + ATP = 2-thiouridine(34) in tRNA + L-cysteinyl-[protein] + A + AMP + diphosphate + H(+). Functionally, catalyzes the 2-thiolation of uridine at the wobble position (U34) of tRNA, leading to the formation of s(2)U34. In Campylobacter concisus (strain 13826), this protein is tRNA-specific 2-thiouridylase MnmA.